The sequence spans 869 residues: Rho GTPase-activating protein 27 (869 aa).

An SH3 domain is found at 6–69; the sequence is EGDVYVLVEH…PAQYVRELPA (64 aa). A disordered region spans residues 104–137; the sequence is GADGSSAEPRGRASSLCGPARQRTSGQRNSLAPG. A phosphoserine mark is found at serine 155, serine 215, and serine 249. WW domains follow at residues 246–280 and 299–333; these read PRLSPVWETHTDAGTGRPYYYNPDTGVTTWESPFE and ESLETEWGQYWDEESGRVFFYNPLTGETVWEDETE. Disordered stretches follow at residues 275–299, 331–389, and 447–474; these read WESPFEAPEGATSPTTSRASVGSGE, ETEE…DLGP, and VPVPAPRSGRKSSQDSDTPAQASPPEEK. Positions 331–343 are enriched in acidic residues; the sequence is ETEELEDDPEEQL. The span at 345-356 shows a compositional bias: polar residues; it reads MQPSLSPRSPGQ. At serine 350 the chain carries Phosphoserine. The region spanning 414-447 is the WW 3 domain; that stretch reads QFTQEQWVRLEDQEGKPYFYNPEDSSVQWELPQV. Residues serine 459 and serine 462 each carry the phosphoserine modification. Threonine 464 carries the phosphothreonine modification. Serine 469 carries the phosphoserine modification. The PH domain maps to 477–593; it reads TLDKAGVLHR…WHKAIAEGIE (117 aa). A disordered region spans residues 598 to 644; it reads DLPQREEGEPSSADFGSSERLGSWKEEDVRPNAASPSLNPGSQESDL. The span at 631-642 shows a compositional bias: polar residues; sequence ASPSLNPGSQES. Serine 632 carries the phosphoserine modification. The region spanning 677–866 is the Rho-GAP domain; sequence CALAQLCERE…LILHQCADIF (190 aa).

In terms of assembly, interacts with SH3KBP1/CIN85.

It localises to the cytoplasm. It is found in the membrane. Its function is as follows. Rho GTPase-activating protein which may be involved in clathrin-mediated endocytosis. GTPase activators for the Rho-type GTPases act by converting them to an inactive GDP-bound state. Has activity toward CDC42 and RAC1. The sequence is that of Rho GTPase-activating protein 27 (Arhgap27) from Rattus norvegicus (Rat).